Here is a 496-residue protein sequence, read N- to C-terminus: Probable CtpA-like serine protease (496 aa).

Residues 1-26 (MRKCFFMSHNPEEKQSNLDSNHKNES) are disordered. The segment covering 10 to 25 (NPEEKQSNLDSNHKNE) has biased composition (basic and acidic residues). Residues 39–59 (FILLLLGVVIITAGITVAATI) form a helical membrane-spanning segment. The PDZ domain occupies 124 to 206 (TKSFNEDVSG…TTVKLTIKRG (83 aa)). Residues S329, D340, and K354 each act as charge relay system in the active site.

It belongs to the peptidase S41A family.

Its subcellular location is the cell membrane. The protein is Probable CtpA-like serine protease of Staphylococcus haemolyticus (strain JCSC1435).